The following is a 265-amino-acid chain: Undecaprenyl-diphosphatase (265 aa).

8 helical membrane-spanning segments follow: residues 1–21, 39–59, 86–106, 112–132, 140–160, 186–206, 219–239, and 244–264; these read MDIL…FLPI, QGLA…ILYF, WCII…GNFI, SVSV…FADA, LAQM…LAMI, FSFL…GLKL, VGVL…LSFI, and MLPF…LVWF.

It belongs to the UppP family.

The protein localises to the cell inner membrane. It carries out the reaction di-trans,octa-cis-undecaprenyl diphosphate + H2O = di-trans,octa-cis-undecaprenyl phosphate + phosphate + H(+). Functionally, catalyzes the dephosphorylation of undecaprenyl diphosphate (UPP). Confers resistance to bacitracin. This chain is Undecaprenyl-diphosphatase, found in Saccharophagus degradans (strain 2-40 / ATCC 43961 / DSM 17024).